Here is a 431-residue protein sequence, read N- to C-terminus: UDP-N-acetylmuramate--L-alanine ligase (431 aa).

Glycine 108 to serine 114 provides a ligand contact to ATP.

The protein belongs to the MurCDEF family.

It is found in the cytoplasm. It carries out the reaction UDP-N-acetyl-alpha-D-muramate + L-alanine + ATP = UDP-N-acetyl-alpha-D-muramoyl-L-alanine + ADP + phosphate + H(+). It functions in the pathway cell wall biogenesis; peptidoglycan biosynthesis. In terms of biological role, cell wall formation. The polypeptide is UDP-N-acetylmuramate--L-alanine ligase (Exiguobacterium sibiricum (strain DSM 17290 / CCUG 55495 / CIP 109462 / JCM 13490 / 255-15)).